The following is a 515-amino-acid chain: Galactose/methyl galactoside import ATP-binding protein MglA (515 aa).

ABC transporter domains are found at residues Leu8–Glu243 and Ile254–Leu499. Gly40–Ser47 serves as a coordination point for ATP.

This sequence belongs to the ABC transporter superfamily. Galactose/methyl galactoside importer (TC 3.A.1.2.3) family. The complex is composed of one ATP-binding protein (MglA), two transmembrane proteins (MglC) and a solute-binding protein (MglB).

The protein resides in the cell membrane. The enzyme catalyses D-galactose(out) + ATP + H2O = D-galactose(in) + ADP + phosphate + H(+). It carries out the reaction methyl beta-D-galactoside(out) + ATP + H2O = methyl beta-D-galactoside(in) + ADP + phosphate + H(+). Its function is as follows. Part of the ABC transporter complex MglABC involved in galactose/methyl galactoside import. Responsible for energy coupling to the transport system. The polypeptide is Galactose/methyl galactoside import ATP-binding protein MglA (Clostridium perfringens (strain ATCC 13124 / DSM 756 / JCM 1290 / NCIMB 6125 / NCTC 8237 / Type A)).